A 236-amino-acid chain; its full sequence is SPbeta prophage-derived uncharacterized protein YomV (236 aa).

The protein is SPbeta prophage-derived uncharacterized protein YomV (yomV) of Bacillus subtilis (strain 168).